Reading from the N-terminus, the 89-residue chain is MYLGKVIGTVVSTSKNESLSGTKLLVVARLTEKLIPDGSTQVVVDTVGAGNGEIVIVSCGSSARQSTGKDHSVIDAAVVGIVDTVETVN.

The BMV domain occupies 1 to 83 (MYLGKVIGTV…IDAAVVGIVD (83 aa)).

Belongs to the CcmL/EutN family. In terms of assembly, homopentamer with a small central pore.

It is found in the bacterial microcompartment. In terms of biological role, probably forms vertices in the bacterial microcompartment (BMC) predicted to be involved in glycyl radical-based 1,2-propanediol metabolism in this organism. The chain is Bacterial microcompartment shell vertex protein GrpN from Rhodospirillum rubrum (strain F11).